The sequence spans 284 residues: GPN-loop GTPase 3 (284 aa).

13-18 (GSGKST) is a GTP binding site. Positions 72 to 74 (GPN) match the Gly-Pro-Asn (GPN)-loop; involved in dimer interface motif. Residue 174–177 (TKMD) participates in GTP binding.

This sequence belongs to the GPN-loop GTPase family. As to quaternary structure, heterodimer with GPN1. Binds to RNA polymerase II (RNAPII). Interacts directly with subunits RPB4 and RPB7 and the CTD of RPB1.

Its function is as follows. Small GTPase required for proper localization of RNA polymerase II (RNAPII). May act at an RNAP assembly step prior to nuclear import. The sequence is that of GPN-loop GTPase 3 from Homo sapiens (Human).